A 351-amino-acid polypeptide reads, in one-letter code: Phospho-N-acetylmuramoyl-pentapeptide-transferase (351 aa).

A run of 10 helical transmembrane segments spans residues 17–37 (TAYA…FIIS), 61–83 (MGIP…FFWI), 88–105 (IYFL…CLGF), 130–150 (ILFS…HVSI), 158–178 (SLKL…LISA), 190–210 (GLAI…AYLT), 230–250 (LVIF…FNAY), 254–274 (IMMG…VALI), 279–299 (ILFA…IIQV), and 328–348 (QVVI…LSTI).

It belongs to the glycosyltransferase 4 family. MraY subfamily. The cofactor is Mg(2+).

It is found in the cell inner membrane. It carries out the reaction UDP-N-acetyl-alpha-D-muramoyl-L-alanyl-gamma-D-glutamyl-meso-2,6-diaminopimeloyl-D-alanyl-D-alanine + di-trans,octa-cis-undecaprenyl phosphate = di-trans,octa-cis-undecaprenyl diphospho-N-acetyl-alpha-D-muramoyl-L-alanyl-D-glutamyl-meso-2,6-diaminopimeloyl-D-alanyl-D-alanine + UMP. The protein operates within cell wall biogenesis; peptidoglycan biosynthesis. Its function is as follows. Catalyzes the initial step of the lipid cycle reactions in the biosynthesis of the cell wall peptidoglycan: transfers peptidoglycan precursor phospho-MurNAc-pentapeptide from UDP-MurNAc-pentapeptide onto the lipid carrier undecaprenyl phosphate, yielding undecaprenyl-pyrophosphoryl-MurNAc-pentapeptide, known as lipid I. The protein is Phospho-N-acetylmuramoyl-pentapeptide-transferase of Borrelia recurrentis (strain A1).